The chain runs to 502 residues: 4,4'-diapophytoene desaturase (4,4'-diaponeurosporene-forming) (502 aa).

Position 5–17 (5–17 (VIGAGVTGLAAAA)) interacts with FAD.

It belongs to the carotenoid/retinoid oxidoreductase family. CrtN subfamily.

It catalyses the reaction 15-cis-4,4'-diapophytoene + 3 FAD + 3 H(+) = all-trans-4,4'-diaponeurosporene + 3 FADH2. It participates in carotenoid biosynthesis; staphyloxanthin biosynthesis; staphyloxanthin from farnesyl diphosphate: step 2/5. Involved in the biosynthesis of the yellow-orange carotenoid staphyloxanthin, which plays a role in the virulence via its protective function against oxidative stress. Catalyzes three successive dehydrogenation reactions that lead to the introduction of three double bonds into 4,4'-diapophytoene (dehydrosqualene), with 4,4'-diapophytofluene and 4,4'-diapo-zeta-carotene as intermediates, and 4,4'-diaponeurosporene (the major deep-yellow pigment in staphylococci strains) as the end product. The polypeptide is 4,4'-diapophytoene desaturase (4,4'-diaponeurosporene-forming) (Staphylococcus aureus (strain MW2)).